Consider the following 244-residue polypeptide: 5-oxoprolinase subunit A (244 aa).

The protein belongs to the LamB/PxpA family. As to quaternary structure, forms a complex composed of PxpA, PxpB and PxpC.

The enzyme catalyses 5-oxo-L-proline + ATP + 2 H2O = L-glutamate + ADP + phosphate + H(+). In terms of biological role, catalyzes the cleavage of 5-oxoproline to form L-glutamate coupled to the hydrolysis of ATP to ADP and inorganic phosphate. The sequence is that of 5-oxoprolinase subunit A from Escherichia coli O157:H7.